Reading from the N-terminus, the 345-residue chain is Biotin synthase (345 aa).

The 219-residue stretch at 38-256 (QQVQVSTLLS…IAVARIMMPS (219 aa)) folds into the Radical SAM core domain. 3 residues coordinate [4Fe-4S] cluster: C53, C57, and C60. C97, C128, C188, and R260 together coordinate [2Fe-2S] cluster.

The protein belongs to the radical SAM superfamily. Biotin synthase family. In terms of assembly, homodimer. [4Fe-4S] cluster serves as cofactor. The cofactor is [2Fe-2S] cluster.

It carries out the reaction (4R,5S)-dethiobiotin + (sulfur carrier)-SH + 2 reduced [2Fe-2S]-[ferredoxin] + 2 S-adenosyl-L-methionine = (sulfur carrier)-H + biotin + 2 5'-deoxyadenosine + 2 L-methionine + 2 oxidized [2Fe-2S]-[ferredoxin]. It participates in cofactor biosynthesis; biotin biosynthesis; biotin from 7,8-diaminononanoate: step 2/2. Its function is as follows. Catalyzes the conversion of dethiobiotin (DTB) to biotin by the insertion of a sulfur atom into dethiobiotin via a radical-based mechanism. This chain is Biotin synthase, found in Photorhabdus laumondii subsp. laumondii (strain DSM 15139 / CIP 105565 / TT01) (Photorhabdus luminescens subsp. laumondii).